A 184-amino-acid chain; its full sequence is Peptide deformylase (184 aa).

The Fe cation site is built by cysteine 92 and histidine 134. Glutamate 135 is an active-site residue. Fe cation is bound at residue histidine 138.

It belongs to the polypeptide deformylase family. Fe(2+) is required as a cofactor.

The enzyme catalyses N-terminal N-formyl-L-methionyl-[peptide] + H2O = N-terminal L-methionyl-[peptide] + formate. Removes the formyl group from the N-terminal Met of newly synthesized proteins. Requires at least a dipeptide for an efficient rate of reaction. N-terminal L-methionine is a prerequisite for activity but the enzyme has broad specificity at other positions. The sequence is that of Peptide deformylase from Psychrobacter arcticus (strain DSM 17307 / VKM B-2377 / 273-4).